Reading from the N-terminus, the 246-residue chain is Large ribosomal subunit protein uL3 (246 aa).

Disordered regions lie at residues 140-162 (SHRS…NKKM) and 215-246 (DVPL…EENA). Q151 carries the post-translational modification N5-methylglutamine. Over residues 234-246 (EAAPEAPASEENA) the composition is skewed to low complexity.

It belongs to the universal ribosomal protein uL3 family. In terms of assembly, part of the 50S ribosomal subunit. Forms a cluster with proteins L14 and L19. In terms of processing, methylated by PrmB.

Its function is as follows. One of the primary rRNA binding proteins, it binds directly near the 3'-end of the 23S rRNA, where it nucleates assembly of the 50S subunit. This Methylorubrum populi (strain ATCC BAA-705 / NCIMB 13946 / BJ001) (Methylobacterium populi) protein is Large ribosomal subunit protein uL3.